Reading from the N-terminus, the 207-residue chain is Protein YABBY 6 (207 aa).

The C4-type zinc-finger motif lies at 16–43; that stretch reads CNFCNTILAVSVPGNSMLNIVTVRCGHC.

The protein belongs to the YABBY family. As to expression, expressed in leaf blades, leaf sheaths and flowers.

It is found in the nucleus. The sequence is that of Protein YABBY 6 (YAB6) from Oryza sativa subsp. japonica (Rice).